The following is a 155-amino-acid chain: Cathelicidin-1 (155 aa).

The N-terminal stretch at 1-29 (METPRASLSLGRWSLWLLLLGLALPSASA) is a signal peptide. A Pyrrolidone carboxylic acid modification is found at Gln-30. Residues 30 to 143 (QALSYREAVL…KQPWAPPQAA (114 aa)) constitute a propeptide that is removed on maturation. 3 disulfide bridges follow: Cys-85-Cys-96, Cys-107-Cys-124, and Cys-146-Cys-154.

It belongs to the cathelicidin family. Large granules of neutrophils.

The protein localises to the secreted. In terms of biological role, potent microbicidal activity; active against S.aureus and E.coli. The chain is Cathelicidin-1 (CATHL1) from Bos taurus (Bovine).